The following is a 336-amino-acid chain: HTH-type transcriptional repressor PurR (336 aa).

The HTH lacI-type domain occupies 2 to 56 (ATIKDVAKMAGVSTTTVSHVINKTRFVAKDTEEAVLSAIKQLNYSPSAVARSLKV). The H-T-H motif DNA-binding region spans 4 to 23 (IKDVAKMAGVSTTTVSHVIN). The DNA-binding element occupies 48–56 (SAVARSLKV). Hypoxanthine contacts are provided by Y73, K188, T190, F219, and D273.

As to quaternary structure, homodimer.

It functions in the pathway purine metabolism; purine nucleotide biosynthesis [regulation]. Its function is as follows. Is the main repressor of the genes involved in the de novo synthesis of purine nucleotides, regulating purB, purC, purEK, purF, purHD, purL, purMN and guaBA expression. PurR is allosterically activated to bind its cognate DNA by binding the purine corepressors, hypoxanthine or guanine, thereby effecting transcription repression. This Haemophilus influenzae (strain PittGG) protein is HTH-type transcriptional repressor PurR.